Here is a 432-residue protein sequence, read N- to C-terminus: Adenylosuccinate synthetase (432 aa).

GTP contacts are provided by residues 13-19 (GDEGKGK) and 41-43 (GHT). Catalysis depends on Asp-14, which acts as the Proton acceptor. Asp-14 and Gly-41 together coordinate Mg(2+). Residues 14-17 (DEGK), 39-42 (NAGH), Thr-130, Arg-144, Gln-225, Thr-240, and Arg-304 contribute to the IMP site. Residue His-42 is the Proton donor of the active site. Residue 300–306 (AVTGRPR) coordinates substrate. GTP contacts are provided by residues Arg-306, 332–334 (KLD), and 415–417 (STG).

It belongs to the adenylosuccinate synthetase family. In terms of assembly, homodimer. Requires Mg(2+) as cofactor.

The protein resides in the cytoplasm. The enzyme catalyses IMP + L-aspartate + GTP = N(6)-(1,2-dicarboxyethyl)-AMP + GDP + phosphate + 2 H(+). It participates in purine metabolism; AMP biosynthesis via de novo pathway; AMP from IMP: step 1/2. Its function is as follows. Plays an important role in the de novo pathway of purine nucleotide biosynthesis. Catalyzes the first committed step in the biosynthesis of AMP from IMP. The chain is Adenylosuccinate synthetase from Haemophilus influenzae (strain ATCC 51907 / DSM 11121 / KW20 / Rd).